The primary structure comprises 468 residues: ATP synthase subunit beta (468 aa).

155–162 (GGAGVGKT) is a binding site for ATP.

The protein belongs to the ATPase alpha/beta chains family. F-type ATPases have 2 components, CF(1) - the catalytic core - and CF(0) - the membrane proton channel. CF(1) has five subunits: alpha(3), beta(3), gamma(1), delta(1), epsilon(1). CF(0) has three main subunits: a(1), b(2) and c(9-12). The alpha and beta chains form an alternating ring which encloses part of the gamma chain. CF(1) is attached to CF(0) by a central stalk formed by the gamma and epsilon chains, while a peripheral stalk is formed by the delta and b chains.

It localises to the cell membrane. It carries out the reaction ATP + H2O + 4 H(+)(in) = ADP + phosphate + 5 H(+)(out). Produces ATP from ADP in the presence of a proton gradient across the membrane. The catalytic sites are hosted primarily by the beta subunits. This chain is ATP synthase subunit beta, found in Streptococcus pyogenes serotype M3 (strain ATCC BAA-595 / MGAS315).